We begin with the raw amino-acid sequence, 55 residues long: U-reduvitoxin-Pr2a (55 aa).

The signal sequence occupies residues 1-21 (MMKFLLVLFLITITLITMAYS). Cystine bridges form between Cys-26–Cys-41, Cys-33–Cys-46, and Cys-40–Cys-51.

It belongs to the venom Ptu1-like knottin family. As to expression, expressed by the venom gland (posterior main gland) (at protein level).

The protein localises to the secreted. Its function is as follows. Binds reversibly and blocks P/Q-type voltage-gated calcium channels (Cav). This is U-reduvitoxin-Pr2a from Platymeris rhadamanthus (Red spot assassin bug).